We begin with the raw amino-acid sequence, 44 residues long: Thymosin beta-10 (44 aa).

It belongs to the thymosin beta family.

The protein localises to the cytoplasm. It localises to the cytoskeleton. Functionally, plays an important role in the organization of the cytoskeleton. Binds to and sequesters actin monomers (G actin) and therefore inhibits actin polymerization. This chain is Thymosin beta-10, found in Torpedo marmorata (Marbled electric ray).